The primary structure comprises 513 residues: uncharacterized protein (513 aa).

Residues 11–219 form the CYTH domain; the sequence is HLEVERKFDV…SKLARVLGAT (209 aa). The CHAD domain occupies 228-506; it reads PQPPADPVHR…LEAALRKLDK (279 aa).

This is an uncharacterized protein from Mycobacterium tuberculosis (strain ATCC 25618 / H37Rv).